We begin with the raw amino-acid sequence, 431 residues long: Protein prenyltransferase alpha subunit repeat-containing protein 1-B (431 aa).

PFTA repeat units follow at residues Glu85–Pro118, Lys120–Leu153, Glu178–Asn211, Asp217–Thr250, and Glu293–Leu326. A disordered region spans residues Pro363–Arg383. A PFTA 6 repeat occupies Ser394–Tyr431.

It belongs to the protein prenyltransferase subunit alpha family.

In Xenopus laevis (African clawed frog), this protein is Protein prenyltransferase alpha subunit repeat-containing protein 1-B (ptar1-b).